Reading from the N-terminus, the 216-residue chain is Holliday junction branch migration complex subunit RuvA (216 aa).

The tract at residues M1 to K64 is domain I. Residues S65–T143 are domain II. The segment at S144–V163 is flexible linker. Residues L164–R216 are domain III.

The protein belongs to the RuvA family. In terms of assembly, homotetramer. Forms an RuvA(8)-RuvB(12)-Holliday junction (HJ) complex. HJ DNA is sandwiched between 2 RuvA tetramers; dsDNA enters through RuvA and exits via RuvB. An RuvB hexamer assembles on each DNA strand where it exits the tetramer. Each RuvB hexamer is contacted by two RuvA subunits (via domain III) on 2 adjacent RuvB subunits; this complex drives branch migration. In the full resolvosome a probable DNA-RuvA(4)-RuvB(12)-RuvC(2) complex forms which resolves the HJ.

Its subcellular location is the cytoplasm. Its function is as follows. The RuvA-RuvB-RuvC complex processes Holliday junction (HJ) DNA during genetic recombination and DNA repair, while the RuvA-RuvB complex plays an important role in the rescue of blocked DNA replication forks via replication fork reversal (RFR). RuvA specifically binds to HJ cruciform DNA, conferring on it an open structure. The RuvB hexamer acts as an ATP-dependent pump, pulling dsDNA into and through the RuvAB complex. HJ branch migration allows RuvC to scan DNA until it finds its consensus sequence, where it cleaves and resolves the cruciform DNA. The protein is Holliday junction branch migration complex subunit RuvA of Francisella tularensis subsp. tularensis (strain WY96-3418).